We begin with the raw amino-acid sequence, 379 residues long: Cytochrome b (379 aa).

Transmembrane regions (helical) follow at residues 33–53, 77–98, 113–133, 178–198, 226–246, 288–308, 320–340, and 347–367; these read FGSLLGLCLLIQILTGLFLAM, WLIRYMHANGASMFFICLFLHV, WNIGVILLFAVMATAFMGYVL, FFAFHFILPFIVAALVMVHLL, IKDVLGVLLLLLLFMMLVLFS, LGGVLALVFSILILMLFPILH, LSQCLFWILVADLFTLTWIGG, and FITIGQVASILYFTIILLALP. Residues H83 and H97 each contribute to the heme b site. Positions 182 and 196 each coordinate heme b.

This sequence belongs to the cytochrome b family. In terms of assembly, the cytochrome bc1 complex contains 11 subunits: 3 respiratory subunits (MT-CYB, CYC1 and UQCRFS1), 2 core proteins (UQCRC1 and UQCRC2) and 6 low-molecular weight proteins (UQCRH/QCR6, UQCRB/QCR7, UQCRQ/QCR8, UQCR10/QCR9, UQCR11/QCR10 and a cleavage product of UQCRFS1). This cytochrome bc1 complex then forms a dimer. It depends on heme b as a cofactor.

The protein resides in the mitochondrion inner membrane. Its function is as follows. Component of the ubiquinol-cytochrome c reductase complex (complex III or cytochrome b-c1 complex) that is part of the mitochondrial respiratory chain. The b-c1 complex mediates electron transfer from ubiquinol to cytochrome c. Contributes to the generation of a proton gradient across the mitochondrial membrane that is then used for ATP synthesis. This is Cytochrome b (MT-CYB) from Sciurus niger (Eastern fox squirrel).